Reading from the N-terminus, the 184-residue chain is dCTP deaminase (184 aa).

107–112 (KSTYAR) is a dCTP binding site. The active-site Proton donor/acceptor is the Glu133. Positions 152, 166, and 176 each coordinate dCTP.

This sequence belongs to the dCTP deaminase family. In terms of assembly, homotrimer.

The catalysed reaction is dCTP + H2O + H(+) = dUTP + NH4(+). Its pathway is pyrimidine metabolism; dUMP biosynthesis; dUMP from dCTP (dUTP route): step 1/2. Functionally, catalyzes the deamination of dCTP to dUTP. This chain is dCTP deaminase, found in Herpetosiphon aurantiacus (strain ATCC 23779 / DSM 785 / 114-95).